A 114-amino-acid chain; its full sequence is MTATILMIAMTLSTILAILSFWLPQMTPDMEKLSPYECGFDPLGSMRLPFSMRFFLIAILFLLFDLEIALLLPFPWAAQLNTPSIVILWAALILTLLTLGLIYEWLQGGLEWAE.

3 helical membrane passes run 3–23, 54–74, and 85–105; these read ATIL…SFWL, FFLI…LLPF, and IVIL…IYEW.

The protein belongs to the complex I subunit 3 family.

It is found in the mitochondrion membrane. The enzyme catalyses a ubiquinone + NADH + 5 H(+)(in) = a ubiquinol + NAD(+) + 4 H(+)(out). In terms of biological role, core subunit of the mitochondrial membrane respiratory chain NADH dehydrogenase (Complex I) that is believed to belong to the minimal assembly required for catalysis. Complex I functions in the transfer of electrons from NADH to the respiratory chain. The immediate electron acceptor for the enzyme is believed to be ubiquinone. The protein is NADH-ubiquinone oxidoreductase chain 3 (mt-nd3) of Xenopus laevis (African clawed frog).